A 353-amino-acid polypeptide reads, in one-letter code: N-acetyl-gamma-glutamyl-phosphate reductase (353 aa).

Cys155 is an active-site residue.

It belongs to the NAGSA dehydrogenase family. Type 1 subfamily.

The protein resides in the cytoplasm. The enzyme catalyses N-acetyl-L-glutamate 5-semialdehyde + phosphate + NADP(+) = N-acetyl-L-glutamyl 5-phosphate + NADPH + H(+). Its pathway is amino-acid biosynthesis; L-arginine biosynthesis; N(2)-acetyl-L-ornithine from L-glutamate: step 3/4. In terms of biological role, catalyzes the NADPH-dependent reduction of N-acetyl-5-glutamyl phosphate to yield N-acetyl-L-glutamate 5-semialdehyde. This Microcystis aeruginosa (strain NIES-843 / IAM M-2473) protein is N-acetyl-gamma-glutamyl-phosphate reductase.